Reading from the N-terminus, the 621-residue chain is Pentatricopeptide repeat-containing protein At3g48250, chloroplastic (621 aa).

Residues Met-1–Val-67 constitute a chloroplast transit peptide. 10 PPR repeats span residues Ser-122–Leu-156, Asp-157–Ser-194, Ser-262–Met-296, Asp-297–Pro-331, Ser-332–Leu-368, Ser-369–Pro-403, Asp-404–Pro-438, Asp-439–Ile-473, Asp-474–Pro-509, and Trp-510–Ala-544.

It belongs to the PPR family. P subfamily.

The protein localises to the plastid. It localises to the chloroplast. This chain is Pentatricopeptide repeat-containing protein At3g48250, chloroplastic, found in Arabidopsis thaliana (Mouse-ear cress).